The following is a 246-amino-acid chain: ATP synthase subunit a, chloroplastic (246 aa).

A run of 5 helical transmembrane segments spans residues 35–55 (AQVL…TFLA), 94–114 (IPFI…GALI), 132–152 (DINT…YAGL), 198–218 (LVVA…MMFL), and 219–239 (GLFT…AYIG).

The protein belongs to the ATPase A chain family. F-type ATPases have 2 components, CF(1) - the catalytic core - and CF(0) - the membrane proton channel. CF(1) has five subunits: alpha(3), beta(3), gamma(1), delta(1), epsilon(1). CF(0) has four main subunits: a, b, b' and c.

It localises to the plastid. It is found in the chloroplast thylakoid membrane. In terms of biological role, key component of the proton channel; it plays a direct role in the translocation of protons across the membrane. The sequence is that of ATP synthase subunit a, chloroplastic from Chara vulgaris (Common stonewort).